We begin with the raw amino-acid sequence, 78 residues long: Small ribosomal subunit protein bS18 (78 aa).

The protein belongs to the bacterial ribosomal protein bS18 family. Part of the 30S ribosomal subunit. Forms a tight heterodimer with protein bS6.

Its function is as follows. Binds as a heterodimer with protein bS6 to the central domain of the 16S rRNA, where it helps stabilize the platform of the 30S subunit. The protein is Small ribosomal subunit protein bS18 of Ligilactobacillus salivarius (strain UCC118) (Lactobacillus salivarius).